A 457-amino-acid chain; its full sequence is MVSSLASNIILALVVVLMTLLRQNKPLQRWFVSYVEKLLSRKSNLAQKVSVLSPSLKLVDVEKSISADQSNLSKINYQIPTLPDLTGNLIRLHEYRARGEGYNGLLFRRARQLNGISEDQLQKLGYFTKLMKNNEGIRENARVIDKIIEFTLGKLIHSNEHDEEFTEEIEKICAEHGYKIKDGHLIQLNPDFVFPIVSSRGSQSVVHEALAHLCRDFSSYYSVERDPLQNFIISRINHHVISAGDMKEKILIVTPGAGVGGLSHTLATTFPKIQVDSIELSALMYICNLFALEYKHDVKIRPFVQQYSCQTVFDNQLRSLSADLSKVGHRSNLDPLWGDFTRYSPISKDYDKIIICSAYFIDTAENMFEYLSSIEALKKYCKELHWVNVGPLKYGTKPLVQFTGDELSRLRKIRGWKDLVEEYEVDSSKGLNGYLTDYESMYQGYYGLLKFHSVFES.

2 helical membrane passes run 1–21 and 250–270; these read MVSS…MTLL and ILIV…ATTF.

The protein resides in the membrane. This is an uncharacterized protein from Saccharomyces cerevisiae (strain ATCC 204508 / S288c) (Baker's yeast).